We begin with the raw amino-acid sequence, 417 residues long: Lipoyl synthase, mitochondrial (417 aa).

Residues Met1 to Phe30 constitute a mitochondrion transit peptide. A disordered region spans residues Ser23–Gly62. Polar residues-rich tracts occupy residues Phe30–Val41 and Pro51–Ala61. Residues Cys132, Cys137, Cys143, Cys163, Cys167, Cys170, and Ser378 each contribute to the [4Fe-4S] cluster site. The Radical SAM core domain occupies Gly146–Leu367.

The protein belongs to the radical SAM superfamily. Lipoyl synthase family. The cofactor is [4Fe-4S] cluster.

The protein localises to the mitochondrion. It carries out the reaction [[Fe-S] cluster scaffold protein carrying a second [4Fe-4S](2+) cluster] + N(6)-octanoyl-L-lysyl-[protein] + 2 oxidized [2Fe-2S]-[ferredoxin] + 2 S-adenosyl-L-methionine + 4 H(+) = [[Fe-S] cluster scaffold protein] + N(6)-[(R)-dihydrolipoyl]-L-lysyl-[protein] + 4 Fe(3+) + 2 hydrogen sulfide + 2 5'-deoxyadenosine + 2 L-methionine + 2 reduced [2Fe-2S]-[ferredoxin]. The protein operates within protein modification; protein lipoylation via endogenous pathway; protein N(6)-(lipoyl)lysine from octanoyl-[acyl-carrier-protein]: step 2/2. Its function is as follows. Catalyzes the radical-mediated insertion of two sulfur atoms into the C-6 and C-8 positions of the octanoyl moiety bound to the lipoyl domains of lipoate-dependent enzymes, thereby converting the octanoylated domains into lipoylated derivatives. The polypeptide is Lipoyl synthase, mitochondrial (Pyrenophora tritici-repentis (strain Pt-1C-BFP) (Wheat tan spot fungus)).